Here is a 224-residue protein sequence, read N- to C-terminus: DNA mismatch repair protein MutH (224 aa).

This sequence belongs to the MutH family.

It localises to the cytoplasm. Sequence-specific endonuclease that cleaves unmethylated GATC sequences. It is involved in DNA mismatch repair. The polypeptide is DNA mismatch repair protein MutH (Histophilus somni (strain 129Pt) (Haemophilus somnus)).